The following is a 245-amino-acid chain: 2,3-bisphosphoglycerate-dependent phosphoglycerate mutase (245 aa).

Residues 8–15 (RHGQSLWN), 21–22 (TG), arginine 60, 87–90 (ERHY), lysine 98, 114–115 (RR), and 183–184 (GN) contribute to the substrate site. The active-site Tele-phosphohistidine intermediate is the histidine 9. Residue glutamate 87 is the Proton donor/acceptor of the active site.

This sequence belongs to the phosphoglycerate mutase family. BPG-dependent PGAM subfamily.

It carries out the reaction (2R)-2-phosphoglycerate = (2R)-3-phosphoglycerate. Its pathway is carbohydrate degradation; glycolysis; pyruvate from D-glyceraldehyde 3-phosphate: step 3/5. In terms of biological role, catalyzes the interconversion of 2-phosphoglycerate and 3-phosphoglycerate. The sequence is that of 2,3-bisphosphoglycerate-dependent phosphoglycerate mutase from Bacillus cytotoxicus (strain DSM 22905 / CIP 110041 / 391-98 / NVH 391-98).